The chain runs to 369 residues: Flagellar P-ring protein (369 aa).

The N-terminal stretch at 1–22 is a signal peptide; that stretch reads MTKFKHLLALAALLLAAGAAQA.

It belongs to the FlgI family. As to quaternary structure, the basal body constitutes a major portion of the flagellar organelle and consists of four rings (L,P,S, and M) mounted on a central rod.

Its subcellular location is the periplasm. The protein resides in the bacterial flagellum basal body. Functionally, assembles around the rod to form the L-ring and probably protects the motor/basal body from shearing forces during rotation. The sequence is that of Flagellar P-ring protein from Pseudomonas aeruginosa (strain LESB58).